The chain runs to 442 residues: Sexual development regulator VELC (442 aa).

Disordered regions lie at residues 1–192 and 396–442; these read MPVH…ASLA and KKGN…IRRS. Residues 45 to 54 show a composition bias toward pro residues; it reads IAPPPPPTPP. A compositionally biased stretch (low complexity) spans 79 to 97; it reads PGPRRPSNPSSPQHPQQPG. The region spanning 213-396 is the Velvet domain; that stretch reads FSTSEYHLHV…KEQGCLISIK (184 aa). Residues 401–411 show a composition bias toward gly residues; it reads KGGGGGGGGPS. Over residues 433–442 the composition is skewed to basic residues; the sequence is AGKRKRIRRS.

This sequence belongs to the velvet family. VelC subfamily.

The protein localises to the nucleus. Functionally, velvet-domain-containing protein that acts as a positive regulator of sexual development. Plays an important role in pathogenicity through regulating positively appressorium-mediated penetration and invasive growth. The protein is Sexual development regulator VELC of Pyricularia oryzae (strain 70-15 / ATCC MYA-4617 / FGSC 8958) (Rice blast fungus).